A 299-amino-acid polypeptide reads, in one-letter code: Small ribosomal subunit protein uS2 (299 aa).

Residues 259-291 (AAASAAGPTSWEADGADWAASSAPAAAGESWAE) show a composition bias toward low complexity. The disordered stretch occupies residues 259–299 (AAASAAGPTSWEADGADWAASSAPAAAGESWAETQPAEGKW).

Belongs to the universal ribosomal protein uS2 family. As to quaternary structure, component of the small ribosomal subunit. Mature ribosomes consist of a small (40S) and a large (60S) subunit. The 40S subunit contains about 33 different proteins and 1 molecule of RNA (18S). The 60S subunit contains about 49 different proteins and 3 molecules of RNA (25S, 5.8S and 5S). Interacts with rps21.

Its subcellular location is the cytoplasm. Required for the assembly and/or stability of the 40S ribosomal subunit. Required for the processing of the 20S rRNA-precursor to mature 18S rRNA in a late step of the maturation of 40S ribosomal subunits. The polypeptide is Small ribosomal subunit protein uS2 (rps0) (Aspergillus flavus (strain ATCC 200026 / FGSC A1120 / IAM 13836 / NRRL 3357 / JCM 12722 / SRRC 167)).